The chain runs to 91 residues: Non-specific lipid-transfer protein 1 (91 aa).

4 cysteine pairs are disulfide-bonded: cysteine 3–cysteine 50, cysteine 13–cysteine 27, cysteine 28–cysteine 73, and cysteine 48–cysteine 87.

It belongs to the plant LTP family.

Functionally, plant non-specific lipid-transfer proteins transfer phospholipids as well as galactolipids across membranes. May play a role in wax or cutin deposition in the cell walls of expanding epidermal cells and certain secretory tissues. The chain is Non-specific lipid-transfer protein 1 from Prunus domestica (Garden plum).